A 66-amino-acid chain; its full sequence is Large ribosomal subunit protein bL35 (66 aa).

Basic residues-rich tracts occupy residues 1-26 (MPKM…KRSH) and 38-48 (QKQKRKLRKSA). Residues 1-48 (MPKMKTHKGAAKRFKKTGSGKLKRSHAFTSHLFANKSQKQKRKLRKSA) form a disordered region.

The protein belongs to the bacterial ribosomal protein bL35 family.

This is Large ribosomal subunit protein bL35 from Halalkalibacterium halodurans (strain ATCC BAA-125 / DSM 18197 / FERM 7344 / JCM 9153 / C-125) (Bacillus halodurans).